A 127-amino-acid polypeptide reads, in one-letter code: Small ribosomal subunit protein bS6 (127 aa).

This sequence belongs to the bacterial ribosomal protein bS6 family.

Functionally, binds together with bS18 to 16S ribosomal RNA. The protein is Small ribosomal subunit protein bS6 of Acinetobacter baumannii (strain AB0057).